Here is a 505-residue protein sequence, read N- to C-terminus: Cytochrome P450 9b1 (505 aa).

A heme-binding site is contributed by Cys449.

This sequence belongs to the cytochrome P450 family. Requires heme as cofactor.

The protein resides in the endoplasmic reticulum membrane. Its subcellular location is the microsome membrane. May be involved in the metabolism of insect hormones and in the breakdown of synthetic insecticides. The sequence is that of Cytochrome P450 9b1 (Cyp9b1) from Drosophila melanogaster (Fruit fly).